We begin with the raw amino-acid sequence, 145 residues long: 3-hydroxyacyl-[acyl-carrier-protein] dehydratase FabZ (145 aa).

Residue H49 is part of the active site.

It belongs to the thioester dehydratase family. FabZ subfamily.

The protein resides in the cytoplasm. The enzyme catalyses a (3R)-hydroxyacyl-[ACP] = a (2E)-enoyl-[ACP] + H2O. Involved in unsaturated fatty acids biosynthesis. Catalyzes the dehydration of short chain beta-hydroxyacyl-ACPs and long chain saturated and unsaturated beta-hydroxyacyl-ACPs. The chain is 3-hydroxyacyl-[acyl-carrier-protein] dehydratase FabZ from Rickettsia felis (strain ATCC VR-1525 / URRWXCal2) (Rickettsia azadi).